A 108-amino-acid polypeptide reads, in one-letter code: Large ribosomal subunit protein bL21 (108 aa).

It belongs to the bacterial ribosomal protein bL21 family. As to quaternary structure, part of the 50S ribosomal subunit. Contacts protein L20.

In terms of biological role, this protein binds to 23S rRNA in the presence of protein L20. This is Large ribosomal subunit protein bL21 from Acidobacterium capsulatum (strain ATCC 51196 / DSM 11244 / BCRC 80197 / JCM 7670 / NBRC 15755 / NCIMB 13165 / 161).